Here is a 446-residue protein sequence, read N- to C-terminus: Ribosome biogenesis protein WDR12 homolog (446 aa).

Residues 21–105 (VQITFFSKDK…ETILKIECII (85 aa)) form a ubiquitin-like (UBL) domain region. 2 WD repeats span residues 171–211 (KCSG…LVEK) and 216–255 (GHER…EATI). The interval 256–275 (YEKEEEESSAKKKRKKDTRT) is disordered. 4 WD repeats span residues 284–324 (GHRD…EVSR), 326–365 (KGPK…GAMV), 371–412 (GHQN…SSLF), and 416–446 (GHED…FETS).

It belongs to the WD repeat WDR12/YTM1 family.

The protein localises to the nucleus. It localises to the nucleolus. Its subcellular location is the nucleoplasm. Functionally, required for maturation of ribosomal RNAs and formation of the large ribosomal subunit. This chain is Ribosome biogenesis protein WDR12 homolog, found in Caenorhabditis briggsae.